Here is a 343-residue protein sequence, read N- to C-terminus: Protein RecA (343 aa).

66–73 lines the ATP pocket; sequence GPESSGKT.

This sequence belongs to the RecA family.

It localises to the cytoplasm. In terms of biological role, can catalyze the hydrolysis of ATP in the presence of single-stranded DNA, the ATP-dependent uptake of single-stranded DNA by duplex DNA, and the ATP-dependent hybridization of homologous single-stranded DNAs. It interacts with LexA causing its activation and leading to its autocatalytic cleavage. This chain is Protein RecA, found in Rickettsia canadensis (strain McKiel).